Reading from the N-terminus, the 679-residue chain is Glycine--tRNA ligase beta subunit (679 aa).

Belongs to the class-II aminoacyl-tRNA synthetase family. As to quaternary structure, tetramer of two alpha and two beta subunits.

It localises to the cytoplasm. The catalysed reaction is tRNA(Gly) + glycine + ATP = glycyl-tRNA(Gly) + AMP + diphosphate. The protein is Glycine--tRNA ligase beta subunit (glyS) of Bacillus subtilis (strain 168).